The primary structure comprises 550 residues: Envelope glycoprotein E (550 aa).

An N-terminal signal peptide occupies residues Met1–Ala20. The Virion surface portion of the chain corresponds to Gly21–Arg419. Residues Cys63–Cys88 form an interaction with gI region. A glycan (N-linked (GlcNAc...) asparagine; by host) is linked at Asn124. Positions Gln162–Pro214 are disordered. Residues Ala164 to Pro173 show a composition bias toward pro residues. Acidic residues predominate over residues Asp175–Ser188. At Tyr176 the chain carries Sulfotyrosine; by host. The segment covering Arg199–Ser209 has biased composition (pro residues). The fc-binding stretch occupies residues Ser235–Gln380. Asn243 is a glycosylation site (N-linked (GlcNAc...) asparagine; by host). 3 cysteine pairs are disulfide-bonded: Cys271-Cys297, Cys280-Cys289, and Cys314-Cys323. Residues Gly394 to Pro413 form a disordered region. Residues Pro403–Pro413 show a composition bias toward low complexity. A helical transmembrane segment spans residues Leu420–Cys440. The Intravirion segment spans residues Met441–Trp550. 2 short sequence motifs (internalization motif) span residues Tyr463–Val466 and Tyr472–Trp475. The interaction with VP22 and UL11 stretch occupies residues Glu470–Pro495. Ser476 and Ser477 each carry phosphoserine; by host CK2. Residues Ser476–Asp484 form an acidic region. The disordered stretch occupies residues Ser476–Trp550. Ser503 carries the phosphoserine modification. Over residues Ser541 to Trp550 the composition is skewed to polar residues.

The protein belongs to the alphaherpesvirinae glycoprotein E family. Interacts with gI; this interaction enhances the Fc receptor function of gE. The heterodimer gE/gI interacts with the Fc part of host IgG. Interacts (via C-terminus) with VP22 tegument protein; this interaction is necessary for the recruitment of VP22 to the Golgi and its packaging into virions. Interacts (via C-terminus) with UL11 tegument protein. Phosphorylated on serines within the acidic cluster. Phosphorylation determines whether endocytosed viral gE traffics to the trans-Golgi network or recycles to the cell membrane. Post-translationally, N-glycosylated, and sulfated.

The protein localises to the virion membrane. Its subcellular location is the host cell membrane. It is found in the host cell junction. The protein resides in the host Golgi apparatus membrane. It localises to the host endosome membrane. Functionally, in epithelial cells, the heterodimer gE/gI is required for the cell-to-cell spread of the virus, by sorting nascent virions to cell junctions. Once the virus reaches the cell junctions, virus particles can spread to adjacent cells extremely rapidly through interactions with cellular receptors that accumulate at these junctions. Implicated in basolateral spread in polarized cells. In neuronal cells, gE/gI is essential for the anterograde spread of the infection throughout the host nervous system. Together with US9, the heterodimer gE/gI is involved in the sorting and transport of viral structural components toward axon tips. In terms of biological role, the heterodimer gE/gI serves as a receptor for the Fc part of host IgG. Dissociation of gE/gI from IgG occurs at acidic pH. May thus be involved in anti-HSV antibodies bipolar bridging, followed by intracellular endocytosis and degradation, thereby interfering with host IgG-mediated immune responses. This is Envelope glycoprotein E (gE) from Human herpesvirus 1 (strain 17) (HHV-1).